The chain runs to 406 residues: MTKSNTINRIGTPLSATATKVMLLGSGELGKEVIISLQRLGVEVIAVDRYSNAPGHQVAHRSYVIDMTDEVALAELINQEKPDLIVPEIEAIATAKLVELENAGTIRVIPTARAAWLTMDREGIRRLAAEELGCATSPYRFADNLKELQAGCAEIGFPCIVKPVMSSSGKGQSKLSSSADVAAAWDCAAAGGRVDSGRVIVEGFIDFEYEITLLTVRAIGADGEVHTHFCEPIGHVQVNGDYVESWQPQRMHPGALQKAHEIAKRVTDNLGGLGLFGVELFVKDDMVWFSEVSPRPHDTGMVTMASQEQSEFELHAKAILGLPVNVALSTPAASAVIYGRHDGKVVSFEGVAEALHIPGTDIRLFGKPESFARRRMGVALAKAADVDTARKNAKAAAAKVNPVVSS.

N(1)-(5-phospho-beta-D-ribosyl)glycinamide-binding positions include 28–29 (EL) and E88. ATP is bound by residues R121, K162, 167 to 172 (SSGKGQ), 202 to 205 (EGFI), and E210. In terms of domain architecture, ATP-grasp spans 126–320 (RLAAEELGCA…EFELHAKAIL (195 aa)). Mg(2+)-binding residues include E279 and E291. N(1)-(5-phospho-beta-D-ribosyl)glycinamide-binding positions include D298, K367, and 374 to 375 (RR).

The protein belongs to the PurK/PurT family. Homodimer.

It carries out the reaction N(1)-(5-phospho-beta-D-ribosyl)glycinamide + formate + ATP = N(2)-formyl-N(1)-(5-phospho-beta-D-ribosyl)glycinamide + ADP + phosphate + H(+). The protein operates within purine metabolism; IMP biosynthesis via de novo pathway; N(2)-formyl-N(1)-(5-phospho-D-ribosyl)glycinamide from N(1)-(5-phospho-D-ribosyl)glycinamide (formate route): step 1/1. In terms of biological role, involved in the de novo purine biosynthesis. Catalyzes the transfer of formate to 5-phospho-ribosyl-glycinamide (GAR), producing 5-phospho-ribosyl-N-formylglycinamide (FGAR). Formate is provided by PurU via hydrolysis of 10-formyl-tetrahydrofolate. In Janthinobacterium sp. (strain Marseille) (Minibacterium massiliensis), this protein is Formate-dependent phosphoribosylglycinamide formyltransferase.